We begin with the raw amino-acid sequence, 423 residues long: ATP-citrate synthase alpha chain protein 2 (423 aa).

Citrate is bound by residues Asn343, Thr345, and Arg376.

The protein belongs to the succinate/malate CoA ligase beta subunit family. Heterooctamer of 4 alpha and 4 beta chains.

Its subcellular location is the cytoplasm. It localises to the cytosol. The catalysed reaction is oxaloacetate + acetyl-CoA + ADP + phosphate = citrate + ATP + CoA. Its function is as follows. ATP citrate-lyase is the primary enzyme responsible for the synthesis of cytosolic acetyl-CoA, used for the elongation of fatty acids and biosynthesis of isoprenoids, flavonoids and malonated derivatives. May supply substrate to the cytosolic acetyl-CoA carboxylase, which generates the malonyl-CoA used for the synthesis of a multitude of compounds, including very long chain fatty acids and flavonoids. Required for normal growth and development and elongation of C18 fatty acids to C20 to C24 fatty acids in seeds. In contrast to all known animal ACL enzymes having a homomeric structure, plant ACLs are composed of alpha and beta chains. The chain is ATP-citrate synthase alpha chain protein 2 (ACLA-2) from Arabidopsis thaliana (Mouse-ear cress).